Here is a 184-residue protein sequence, read N- to C-terminus: Tumor protein D52 (184 aa).

A disordered region spans residues 1–43 (MDRGEQGLLRTDTVPEEAEDAAATISATETLSEEEQEELRREL). A coiled-coil region spans residues 22–74 (AATISATETLSEEEQEELRRELAKVEEEIQTLSQVLAAREKHLAEIKRKLGIN). At Ser136 the chain carries Phosphoserine. Residues 147–184 (KVGGTKPAGGDFGEVLNSTANASATSGEPVPEQTQEGL) are disordered. Positions 162–184 (LNSTANASATSGEPVPEQTQEGL) are enriched in polar residues.

Belongs to the TPD52 family. As to quaternary structure, forms a homodimer or heterodimer with other members of the family. Post-translationally, phosphorylated in a calcium/calmodulin-dependent manner.

The polypeptide is Tumor protein D52 (TPD52) (Oryctolagus cuniculus (Rabbit)).